A 261-amino-acid chain; its full sequence is Zaragozic acid A biosynthesis cluster protein 8 (261 aa).

A compositionally biased stretch (polar residues) spans 242–254 (GTRSHTPAATQRR). Residues 242 to 261 (GTRSHTPAATQRRGQGRGCG) are disordered.

It functions in the pathway secondary metabolite biosynthesis. Its function is as follows. Part of the gene cluster that mediates the biosynthesis of squalestatin S1 (SQS1, also known as zaragozic acid A), a heavily oxidized fungal polyketide that offers potent cholesterol lowering activity by targeting squalene synthase (SS). SQS1 is composed of a 2,8-dioxobicyclic[3.2.1]octane-3,4,5-tricarboxyclic acid core that is connected to two lipophilic polyketide arms. These initial steps feature the priming of an unusual benzoic acid starter unit onto the highly reducing polyketide synthase clz14, followed by oxaloacetate extension and product release to generate a tricarboxylic acid containing product. The phenylalanine ammonia lyase (PAL) clz10 and the acyl-CoA ligase clz12 are involved in transforming phenylalanine into benzoyl-CoA. The citrate synthase-like protein clz17 is involved in connecting the C-alpha-carbons of the hexaketide chain and oxaloacetate to afford the tricarboxylic acid unit. The potential hydrolytic enzymes, clz11 and clz13, are in close proximity to pks2 and may participate in product release. On the other side, the tetraketide arm is synthesized by a the squalestatin tetraketide synthase clz2 and enzymatically esterified to the core in the last biosynthetic step, by the acetyltransferase clz6. The biosynthesis of the tetraketide must involve 3 rounds of chain extension. After the first and second rounds methyl-transfer occurs, and in all rounds of extension the ketoreductase and dehydratase are active. The enoyl reductase and C-MeT of clz2 are not active in the final round of extension. The acetyltransferase clz6 appears to have a broad substrate selectivity for its acyl CoA substrate, allowing the in vitro synthesis of novel squalestatins. The biosynthesis of SQS1 requires several oxidative steps likely performed by oxidoreductases clz3, clz15 and clz16. Finally, in support of the identification of the cluster as being responsible for SQS1 production, the cluster contains a gene encoding a putative squalene synthase (SS) clz20, suggesting a likely mechanism for self-resistance. In Cochliobolus lunatus (Filamentous fungus), this protein is Zaragozic acid A biosynthesis cluster protein 8.